A 246-amino-acid polypeptide reads, in one-letter code: Ureidoacrylate amidohydrolase RutB (246 aa).

Positions 1–27 (MSAVTAAGYQAPQERSQSVTLPARPEP) are disordered. D41 acts as the Proton acceptor in catalysis. The active site involves K150. Residue C183 is the Nucleophile of the active site.

It belongs to the isochorismatase family. RutB subfamily.

It catalyses the reaction (Z)-3-ureidoacrylate + H2O + H(+) = (Z)-3-aminoacrylate + NH4(+) + CO2. The enzyme catalyses (Z)-3-ureidoacrylate + H2O = (Z)-3-aminoacrylate + carbamate + H(+). The catalysed reaction is (Z)-2-methylureidoacrylate + H2O + H(+) = (Z)-2-methylaminoacrylate + NH4(+) + CO2. Hydrolyzes ureidoacrylate to form aminoacrylate and carbamate. The carbamate hydrolyzes spontaneously, thereby releasing one of the nitrogen atoms of the pyrimidine ring as ammonia and one of its carbon atoms as CO2. The chain is Ureidoacrylate amidohydrolase RutB from Rhizobium rhizogenes (strain K84 / ATCC BAA-868) (Agrobacterium radiobacter).